A 257-amino-acid chain; its full sequence is NAD-capped RNA hydrolase NudC (257 aa).

Substrate is bound at residue arginine 69. Cysteine 98 and cysteine 101 together coordinate Zn(2+). Position 111 (glutamate 111) interacts with substrate. Zn(2+)-binding residues include cysteine 116 and cysteine 119. Tyrosine 124 lines the substrate pocket. In terms of domain architecture, Nudix hydrolase spans 125–248 (PQIAPCIIVA…TVARRLIEDT (124 aa)). Positions 158, 174, and 178 each coordinate a divalent metal cation. Residues 159–180 (GFVEVGETLEQAVAREVMEESG) carry the Nudix box motif. 192 to 199 (QPWPFPQS) contributes to the substrate binding site. Glutamate 219 provides a ligand contact to a divalent metal cation. Alanine 241 is a binding site for substrate.

It belongs to the Nudix hydrolase family. NudC subfamily. In terms of assembly, homodimer. Mg(2+) is required as a cofactor. It depends on Mn(2+) as a cofactor. Requires Zn(2+) as cofactor.

It carries out the reaction a 5'-end NAD(+)-phospho-ribonucleoside in mRNA + H2O = a 5'-end phospho-adenosine-phospho-ribonucleoside in mRNA + beta-nicotinamide D-ribonucleotide + 2 H(+). The catalysed reaction is NAD(+) + H2O = beta-nicotinamide D-ribonucleotide + AMP + 2 H(+). It catalyses the reaction NADH + H2O = reduced beta-nicotinamide D-ribonucleotide + AMP + 2 H(+). In terms of biological role, mRNA decapping enzyme that specifically removes the nicotinamide adenine dinucleotide (NAD) cap from a subset of mRNAs by hydrolyzing the diphosphate linkage to produce nicotinamide mononucleotide (NMN) and 5' monophosphate mRNA. The NAD-cap is present at the 5'-end of some mRNAs and stabilizes RNA against 5'-processing. Has preference for mRNAs with a 5'-end purine. Catalyzes the hydrolysis of a broad range of dinucleotide pyrophosphates. The chain is NAD-capped RNA hydrolase NudC from Salmonella heidelberg (strain SL476).